Here is a 472-residue protein sequence, read N- to C-terminus: MSASRLISRDPYTGEAIADFAVNDARSIDAACHSARAAFAEWAMTPLAERRAIALRFAETVRARREEIATLIARETGKPMWEALTEADSVAAKVAISIRAQDERAGERSEPMADATARLAHRPHGVLAVIGPFNFPMHLANGHIVPALLAGNAVVFKPSEKTPACGQLMGELWRAAGLPDHVLTIVIGGGEAGEALVRHEALDGVLFTGGVQAGRAIHRALADAPHKILALELGGNAPLVVWDVADIEAAAHLIVQSAYVTAGQRCTCARRLILPEGARGDALLEALTMLMDRLVIGGPFQSPAPFMGPVIDAHAAAQVLAAQDRMTADGGRPLRLAAVREARSALLSPGLIELTDAPLRDEEIFGPLLQVRRAADFDAALALANATRFGLAAGLISDDEALYRRFWTSVRAGIVNWNRPTTGASSAAPFGGVGGSGNHRPSAYYAADYSAYPVAGLESPSPVYRLPIGLNP.

Position 209 to 214 (209 to 214 (GGVQAG)) interacts with NAD(+). Catalysis depends on residues Glu232 and Cys266.

It belongs to the aldehyde dehydrogenase family. AstD subfamily.

It catalyses the reaction N-succinyl-L-glutamate 5-semialdehyde + NAD(+) + H2O = N-succinyl-L-glutamate + NADH + 2 H(+). The protein operates within amino-acid degradation; L-arginine degradation via AST pathway; L-glutamate and succinate from L-arginine: step 4/5. In terms of biological role, catalyzes the NAD-dependent reduction of succinylglutamate semialdehyde into succinylglutamate. The protein is N-succinylglutamate 5-semialdehyde dehydrogenase 1 of Caulobacter vibrioides (strain ATCC 19089 / CIP 103742 / CB 15) (Caulobacter crescentus).